A 404-amino-acid chain; its full sequence is Cysteine desulfurase IscS (404 aa).

Pyridoxal 5'-phosphate is bound by residues 75-76, N155, Q183, and 203-205; these read AT and SGH. K206 is subject to N6-(pyridoxal phosphate)lysine. A pyridoxal 5'-phosphate-binding site is contributed by T243. The active-site Cysteine persulfide intermediate is C328. A [2Fe-2S] cluster-binding site is contributed by C328.

This sequence belongs to the class-V pyridoxal-phosphate-dependent aminotransferase family. NifS/IscS subfamily. As to quaternary structure, homodimer. Forms a heterotetramer with IscU, interacts with other sulfur acceptors. It depends on pyridoxal 5'-phosphate as a cofactor.

It localises to the cytoplasm. The enzyme catalyses (sulfur carrier)-H + L-cysteine = (sulfur carrier)-SH + L-alanine. Its pathway is cofactor biosynthesis; iron-sulfur cluster biosynthesis. Functionally, master enzyme that delivers sulfur to a number of partners involved in Fe-S cluster assembly, tRNA modification or cofactor biosynthesis. Catalyzes the removal of elemental sulfur atoms from cysteine to produce alanine. Functions as a sulfur delivery protein for Fe-S cluster synthesis onto IscU, an Fe-S scaffold assembly protein, as well as other S acceptor proteins. This is Cysteine desulfurase IscS from Shewanella pealeana (strain ATCC 700345 / ANG-SQ1).